Reading from the N-terminus, the 172-residue chain is MVINFEELHPNERAELERNIFFSTLEQLKGWARSNSLWPMTFGLACCAIEMMGVGSSHYDLDRFGSFFRTSPRQSDVMIVSGTVTKKMAPIVRRLYDQMPEPKWVIAMGSCATAGGPYVNSYAVVKGVDQIVPVDVYIPGCPPNPAALIYGINKLKEKIRYEAKTGKQVTNK.

The [4Fe-4S] cluster site is built by Cys-46, Cys-47, Cys-111, and Cys-141.

Belongs to the complex I 20 kDa subunit family. As to quaternary structure, NDH-1 is composed of 14 different subunits. Subunits NuoB, C, D, E, F, and G constitute the peripheral sector of the complex. [4Fe-4S] cluster is required as a cofactor.

The protein resides in the cell membrane. It carries out the reaction a quinone + NADH + 5 H(+)(in) = a quinol + NAD(+) + 4 H(+)(out). Functionally, NDH-1 shuttles electrons from NADH, via FMN and iron-sulfur (Fe-S) centers, to quinones in the respiratory chain. The immediate electron acceptor for the enzyme in this species is believed to be a menaquinone. Couples the redox reaction to proton translocation (for every two electrons transferred, four hydrogen ions are translocated across the cytoplasmic membrane), and thus conserves the redox energy in a proton gradient. In Bacillus anthracis (strain A0248), this protein is NADH-quinone oxidoreductase subunit B.